The following is a 93-amino-acid chain: Muconolactone Delta-isomerase (93 aa).

This sequence belongs to the muconolactone Delta-isomerase family. In terms of assembly, homodecamer.

The catalysed reaction is (S)-muconolactone = (4,5-dihydro-5-oxofuran-2-yl)-acetate. Its pathway is aromatic compound metabolism; beta-ketoadipate pathway; 5-oxo-4,5-dihydro-2-furylacetate from catechol: step 3/3. This chain is Muconolactone Delta-isomerase (catC), found in Rhodococcus opacus (Nocardia opaca).